The sequence spans 313 residues: GDP-D-glycero-alpha-D-manno-heptose dehydrogenase (313 aa).

NADH-binding positions include 13–14 (YI), 33–39 (DNLMFDQ), phenylalanine 37, 57–58 (DA), leucine 77, and 144–148 (YGIDK). Residue threonine 168 participates in GDP binding. NADH contacts are provided by residues valine 169 and 175-177 (RMR). Residues 179–184 (DLLVND), 196–198 (VLF), arginine 204, lysine 242, and arginine 270 each bind GDP. Asparagine 311 is an NADH binding site.

As to quaternary structure, homotetramer. It depends on NAD(+) as a cofactor.

The enzyme catalyses GDP-D-glycero-alpha-D-manno-heptose + 2-oxoglutarate = GDP-D-glycero-4-keto-alpha-D-lyxo-heptose + (S)-2-hydroxyglutarate. It functions in the pathway capsule biogenesis; capsule polysaccharide biosynthesis. Functionally, NAD-dependent dehydrogenase involved in the biosynthesis of heptose moieties with a hydroxyl group at C6 found on the capsular polysaccharide (CPS) of C.jejuni. Catalyzes the initial oxidation of C4 of the GDP-D-glycero-alpha-D-manno-heptose to form GDP-D-glycero-4-keto-alpha-D-lyxo-heptose in the presence of alpha-ketoglutarate required to recycle the NADH nucleotide. This chain is GDP-D-glycero-alpha-D-manno-heptose dehydrogenase, found in Campylobacter jejuni subsp. jejuni serotype O:2 (strain ATCC 700819 / NCTC 11168).